The primary structure comprises 330 residues: Aspartate--ammonia ligase (330 aa).

It belongs to the class-II aminoacyl-tRNA synthetase family. AsnA subfamily. As to quaternary structure, homodimer.

The protein resides in the cytoplasm. It catalyses the reaction L-aspartate + NH4(+) + ATP = L-asparagine + AMP + diphosphate + H(+). Its pathway is amino-acid biosynthesis; L-asparagine biosynthesis; L-asparagine from L-aspartate (ammonia route): step 1/1. The sequence is that of Aspartate--ammonia ligase from Salmonella typhimurium (strain LT2 / SGSC1412 / ATCC 700720).